Consider the following 337-residue polypeptide: Viral cathepsin (337 aa).

The first 16 residues, 1–16 (MNKILILLLLVSAVLT), serve as a signal peptide directing secretion. The propeptide at 17–126 (SHDQVVAVTI…VVDGPGQRQR (110 aa)) is activation peptide. 3 cysteine pairs are disulfide-bonded: Cys147–Cys188, Cys181–Cys221, and Cys276–Cys324. The active site involves Cys150. Residues His283 and Asn303 contribute to the active site.

Belongs to the peptidase C1 family. Synthesized as an inactive proenzyme and activated by proteolytic removal of the inhibitory propeptide.

It carries out the reaction Endopeptidase of broad specificity, hydrolyzing substrates of both cathepsin L and cathepsin B.. Functionally, cysteine protease that plays an essential role in host liquefaction to facilitate horizontal transmission of the virus. May participate in the degradation of foreign protein expressed by the baculovirus system. This Mamestra configurata (bertha armyworm) protein is Viral cathepsin (VCATH).